Consider the following 439-residue polypeptide: Paraneoplastic antigen-like protein 8A (439 aa).

The tract at residues 213–439 (ETPNNWNATE…RRATNESRKV (227 aa)) is disordered. The segment covering 231-249 (LVRRAGAKSRSRRKKQKKN) has biased composition (basic residues). The segment covering 403–419 (KAPQGQQPAEATASTSR) has biased composition (polar residues). A compositionally biased stretch (basic and acidic residues) spans 423-439 (AKPEGSPRRATNESRKV).

This sequence belongs to the PNMA family.

The protein is Paraneoplastic antigen-like protein 8A (PNMA8A) of Pongo abelii (Sumatran orangutan).